The chain runs to 279 residues: Oxygen-dependent coproporphyrinogen-III oxidase (279 aa).

Ser-102 provides a ligand contact to substrate. A divalent metal cation is bound by residues His-106 and His-116. His-116 acts as the Proton donor in catalysis. 118 to 120 is a substrate binding site; the sequence is NTR. Positions 149 and 179 each coordinate a divalent metal cation. Residues 244 to 279 are important for dimerization; it reads YVEFNLLYDRGTKFGLMTDGNVEAILMSLPPEVKFN.

It belongs to the aerobic coproporphyrinogen-III oxidase family. Homodimer. A divalent metal cation serves as cofactor.

It localises to the cytoplasm. It catalyses the reaction coproporphyrinogen III + O2 + 2 H(+) = protoporphyrinogen IX + 2 CO2 + 2 H2O. Its pathway is porphyrin-containing compound metabolism; protoporphyrin-IX biosynthesis; protoporphyrinogen-IX from coproporphyrinogen-III (O2 route): step 1/1. Functionally, involved in the heme biosynthesis. Catalyzes the aerobic oxidative decarboxylation of propionate groups of rings A and B of coproporphyrinogen-III to yield the vinyl groups in protoporphyrinogen-IX. The polypeptide is Oxygen-dependent coproporphyrinogen-III oxidase (Rickettsia felis (strain ATCC VR-1525 / URRWXCal2) (Rickettsia azadi)).